Here is a 446-residue protein sequence, read N- to C-terminus: MTRRSVSRKRRANPGSGPGEQSDWDHSAHKRKRLPPEKKSLVFYLKSRELKPHNDSTYLHLLRGHAACTLPSILSEREFHLGNLNKVFASQWLNHRQVVCGTKCNTLFVVDVQTGQITRIPILKDREPINGSHQSCGIHAIEINPSRTLLATGGDNPNSIAVYRLPTLDPVCVGDGGHNDWIFSIAWISDTMAVSGSRDGSMGLWEMTDEVVNKSDFQHGLSRVPVYSHISHKALKDIPKESSNPVNCKVRALAFNSNNKELGAVSLDGFFHLWKAEQTLSKLLSTKLPYCRENVCLAYGLEWSLYAVGSQAHVSFLDPRQPPHCAKSVYCREQGSGIRSVSFYEHIVTVGTGQGALLFYDIRAQRFLEDSTGNCRNAKKKGDTLKLSTGKGWLNHNEMWLNYFSDIDCCPNAVYTHCYDSSGTKLFVAGGPLPTGLHGNYAGLWS.

The segment covering 1-12 has biased composition (basic residues); the sequence is MTRRSVSRKRRA. The segment at 1–32 is disordered; sequence MTRRSVSRKRRANPGSGPGEQSDWDHSAHKRK. WD repeat units lie at residues 132–173, 177–215, 245–284, and 333–370; these read SHQS…PVCV, GHND…VNKS, PVNC…SKLL, and EQGS…FLED.

Belongs to the WD repeat DCAF12 family. Component of the DCX(DCAF12) E3 ubiquitin ligase complex, at least composed of cul4 (cul4a or cul4b), ddb1, dcaf12 and rbx1.

It localises to the cytoplasm. The protein resides in the cytoskeleton. It is found in the microtubule organizing center. Its subcellular location is the centrosome. The protein localises to the nucleus. It functions in the pathway protein modification; protein ubiquitination. Substrate-recognition component of a DCX (DDB1-CUL4-X-box) E3 ubiquitin-protein ligase complex of the DesCEND (destruction via C-end degrons) pathway, which recognizes a C-degron located at the extreme C terminus of target proteins, leading to their ubiquitination and degradation. The C-degron recognized by the DesCEND pathway is usually a motif of less than ten residues and can be present in full-length proteins, truncated proteins or proteolytically cleaved forms. The DCX(DCAF12) complex specifically recognizes proteins with a diglutamate (Glu-Glu) at the C-terminus leading to their ubiquitination and degradation. Also directly recognizes the C-terminal glutamate-leucine (Glu-Leu) degron as an alternative degron in proteins leading to their ubiquitination and degradation. This chain is DDB1- and CUL4-associated factor 12-A (dcaf12-a), found in Xenopus laevis (African clawed frog).